The chain runs to 149 residues: D-aminoacyl-tRNA deacylase (149 aa).

Residues 137 to 138 carry the Gly-cisPro motif, important for rejection of L-amino acids motif; the sequence is GP.

The protein belongs to the DTD family. Homodimer.

The protein resides in the cytoplasm. It catalyses the reaction glycyl-tRNA(Ala) + H2O = tRNA(Ala) + glycine + H(+). The enzyme catalyses a D-aminoacyl-tRNA + H2O = a tRNA + a D-alpha-amino acid + H(+). In terms of biological role, an aminoacyl-tRNA editing enzyme that deacylates mischarged D-aminoacyl-tRNAs. Also deacylates mischarged glycyl-tRNA(Ala), protecting cells against glycine mischarging by AlaRS. Acts via tRNA-based rather than protein-based catalysis; rejects L-amino acids rather than detecting D-amino acids in the active site. By recycling D-aminoacyl-tRNA to D-amino acids and free tRNA molecules, this enzyme counteracts the toxicity associated with the formation of D-aminoacyl-tRNA entities in vivo and helps enforce protein L-homochirality. In Alkaliphilus metalliredigens (strain QYMF), this protein is D-aminoacyl-tRNA deacylase.